A 584-amino-acid chain; its full sequence is Protein disulfide-isomerase-like protein of the testis (584 aa).

The signal sequence occupies residues 1 to 20 (MDLLWMPLLLVAACVSAVHS). Residues Asn58, Asn128, Asn160, and Asn340 are each glycosylated (N-linked (GlcNAc...) asparagine). A Thioredoxin domain is found at 388-451 (LVKQLVGKNF…IAKIDVTAND (64 aa)). Asn540 carries N-linked (GlcNAc...) asparagine glycosylation. The Prevents secretion from ER signature appears at 581–584 (KEEL).

It belongs to the protein disulfide isomerase family. Homodimer. The homodimer is not disulfide-linked. Interacts with ERO1A and CLGN. Post-translationally, N-glycosylated. In terms of tissue distribution, testis-specific.

The protein localises to the endoplasmic reticulum. Probable redox-inactive chaperone involved in spermatogenesis. The sequence is that of Protein disulfide-isomerase-like protein of the testis (PDILT) from Homo sapiens (Human).